The primary structure comprises 319 residues: Capsid protein (319 aa).

The protein localises to the virion. Its function is as follows. The capsid protein self-assembles to form an icosahedral capsid with a T=2 symmetry made of 120 subunits. The sequence is that of Capsid protein from Cryptosporidium parvum virus 1 (strain KSU-1).